A 119-amino-acid polypeptide reads, in one-letter code: Holo-[acyl-carrier-protein] synthase (119 aa).

The Mg(2+) site is built by Asp2 and Glu51.

It belongs to the P-Pant transferase superfamily. AcpS family. Requires Mg(2+) as cofactor.

The protein resides in the cytoplasm. The enzyme catalyses apo-[ACP] + CoA = holo-[ACP] + adenosine 3',5'-bisphosphate + H(+). Transfers the 4'-phosphopantetheine moiety from coenzyme A to a Ser of acyl-carrier-protein. The protein is Holo-[acyl-carrier-protein] synthase of Chlorobium luteolum (strain DSM 273 / BCRC 81028 / 2530) (Pelodictyon luteolum).